Reading from the N-terminus, the 201-residue chain is Small ribosomal subunit protein uS4c (201 aa).

The segment at 15-44 (LGALPGLTNKRPRAGSDLRNQSRSGKKSQY) is disordered. The region spanning 89-149 (MRLDNILFRL…DEQKSRALIQ (61 aa)) is the S4 RNA-binding domain.

This sequence belongs to the universal ribosomal protein uS4 family. Part of the 30S ribosomal subunit. Contacts protein S5. The interaction surface between S4 and S5 is involved in control of translational fidelity.

It is found in the plastid. It localises to the chloroplast. In terms of biological role, one of the primary rRNA binding proteins, it binds directly to 16S rRNA where it nucleates assembly of the body of the 30S subunit. Functionally, with S5 and S12 plays an important role in translational accuracy. In Helianthus annuus (Common sunflower), this protein is Small ribosomal subunit protein uS4c (rps4).